Reading from the N-terminus, the 260-residue chain is uncharacterized protein (260 aa).

Transmembrane regions (helical) follow at residues 39–59 (IFYL…LIEA), 68–88 (IIVG…SFLI), 111–131 (FLGS…FFLG), 159–179 (LIFS…LFKI), 193–213 (FIYL…ILSQ), and 214–234 (FILV…IKLI).

Belongs to the TatC family.

It is found in the mitochondrion membrane. This is an uncharacterized protein from Reclinomonas americana.